The chain runs to 83 residues: MLLPKISILLYILVVLQETAAVRGALFRSGRAVPFERVVGQQDFLRFGRAGMASGVGGGSEGGPDDVKNSYIRVNGEPEIVYQ.

The first 24 residues, 1 to 24 (MLLPKISILLYILVVLQETAAVRG), serve as a signal peptide directing secretion. A propeptide spanning residues 25–36 (ALFRSGRAVPFE) is cleaved from the precursor. Phenylalanine amide is present on Phe-47. The propeptide occupies 50-83 (AGMASGVGGGSEGGPDDVKNSYIRVNGEPEIVYQ).

This sequence belongs to the FARP (FMRFamide related peptide) family. As to expression, each flp gene is expressed in a distinct set of neurons.

The protein resides in the secreted. Its function is as follows. FMRFamides and FMRFamide-like peptides are neuropeptides. The protein is FMRFamide-like neuropeptide 23 (flp-23) of Caenorhabditis elegans.